The sequence spans 618 residues: MADSSPQLAKLRSLMKERKVHVYVIPSEDSHSSEYIAACDARREFISGFTGSAGCAIVTLEAAALATDGRYFNQAAKQLDGNWTLLKQGLQDVPTWQEWAASQSAGGKIVAVDPSLLPGSAAKKLNDQVRKAGGADLVPLDENIVDIAWGDSRPERPCQPVSVLPDELAGKPVATKIEELRQELAKKNCPGFFVSMLDEVAWLFNLRGSDIPYNPVFFSYATITPETAILYVDESKLDDSCRAHLRENNVQVKPYDSFLPDARHLHTEVKTKRQAGGDGVVIGNFLISNKASWAMSRALGGDGSVEEMRSPVGDAKAVKNETEMNGMRACHVRDGAALIEFFAWLEDQLVDKKIMIDEVQAADKLEQLRSKQQHFVGLSFPTISSTGANAAIIHYGPEKGSCATIDAGSVYLCDSGAQYRDGTTDTTRTLHFGKPSDAEKKAYTLVLKGLIGLDTAVFPKGTTGFALDCLARQHLWKNGLDYRHGTGHGVGSYLNVHEGPIGIGTRVQYTEVPLAPGNVLSNEPGYYEDGNFGIRIENIMMVREVQTEHCFGDKSYLGFEHVTMVPYCQSLIERDMLTADEKAWLNAYNDEVLKNTRGFFEGDDLTMSWLTRETRPVE.

Mn(2+)-binding residues include Asp-414, Asp-425, Glu-523, and Glu-537.

It belongs to the peptidase M24B family. It depends on Mn(2+) as a cofactor.

It catalyses the reaction Release of any N-terminal amino acid, including proline, that is linked to proline, even from a dipeptide or tripeptide.. Its function is as follows. Catalyzes the removal of a penultimate prolyl residue from the N-termini of peptides. The protein is Probable Xaa-Pro aminopeptidase P (AMPP) of Metarhizium acridum (strain CQMa 102).